Reading from the N-terminus, the 220-residue chain is pH-response regulator palI/RIM9 homolog 1 (220 aa).

The Cytoplasmic portion of the chain corresponds to 1–5 (MSHFK). The chain crosses the membrane as a helical span at residues 6–26 (IVFLTSLSLALVFELFNTISV). Topologically, residues 27–89 (PITSHLFISE…NHAKYALSKL (63 aa)) are extracellular. A helical membrane pass occupies residues 90-110 (LLVHVLSFVCVLVFWLFAILI). The Cytoplasmic portion of the chain corresponds to 111–121 (CIKWLNTSKSV). Residues 122–142 (LLFAVGWSMVTFMVSLLGFLI) traverse the membrane as a helical segment. The Extracellular portion of the chain corresponds to 143–155 (DVLMFASHVTWSS). The helical transmembrane segment at 156–176 (WLMLVSAFFVALSGILLCLMI) threads the bilayer. The Cytoplasmic segment spans residues 177–220 (RDLSYRRFVKLQGEVDVCVPMTEPRDPDELNEIWKKKTSKREIL).

It belongs to the palI/RIM9 family.

The protein resides in the cell membrane. In terms of biological role, required for the proteolytic cleavage of the transcription factor RIM101 in response to alkaline ambient pH. This Kluyveromyces lactis (strain ATCC 8585 / CBS 2359 / DSM 70799 / NBRC 1267 / NRRL Y-1140 / WM37) (Yeast) protein is pH-response regulator palI/RIM9 homolog 1.